A 223-amino-acid chain; its full sequence is Sigma non-opioid intracellular receptor 1 (223 aa).

Residues 1–9 (MQWAVGRRW) are Lumenal-facing. Residues 2 to 8 (QWAVGRR) form a targeting to endoplasmic reticulum-associated lipid droplets region. Residues 10–30 (LWVALFLAAVAVLTQIVWLWL) form a helical membrane-spanning segment. The Cytoplasmic segment spans residues 31-223 (GTQNFVFQRE…LTTYLFGQDP (193 aa)). Residues 99–106 (SLSEYVLL) form an important for ligand-binding region. The segment at 177-223 (VIPSTLGFALADTVFSTQDFLTLFYTLRVYARALQLELTTYLFGQDP) is C-terminal hydrophobic region.

It belongs to the ERG2 family. Homotrimer. Forms a ternary complex with ANK2 and ITPR3. The complex is disrupted by agonists. Interacts with KCNA4. Interacts with KCNA2; cocaine consumption leads to increased interaction. Interacts with RNF112 in an oxidative stress-regulated manner. In terms of tissue distribution, ubiquitously expressed with higher expression in liver, kidney and steroid-producing tissues such as placenta, ovary and adrenal gland.

It localises to the nucleus inner membrane. The protein resides in the nucleus outer membrane. Its subcellular location is the nucleus envelope. The protein localises to the cytoplasmic vesicle. It is found in the endoplasmic reticulum membrane. It localises to the membrane. The protein resides in the lipid droplet. Its subcellular location is the cell junction. The protein localises to the cell membrane. It is found in the cell projection. It localises to the growth cone. The protein resides in the postsynaptic density membrane. Functionally, functions in lipid transport from the endoplasmic reticulum and is involved in a wide array of cellular functions probably through regulation of the biogenesis of lipid microdomains at the plasma membrane. Involved in the regulation of different receptors it plays a role in BDNF signaling and EGF signaling. Also regulates ion channels like the potassium channel and could modulate neurotransmitter release. Plays a role in calcium signaling through modulation together with ANK2 of the ITP3R-dependent calcium efflux at the endoplasmic reticulum. Plays a role in several other cell functions including proliferation, survival and death. Originally identified for its ability to bind various psychoactive drugs it is involved in learning processes, memory and mood alteration. Necessary for proper mitochondrial axonal transport in motor neurons, in particular the retrograde movement of mitochondria. Plays a role in protecting cells against oxidative stress-induced cell death via its interaction with RNF112. In Cavia porcellus (Guinea pig), this protein is Sigma non-opioid intracellular receptor 1 (SIGMAR1).